A 608-amino-acid polypeptide reads, in one-letter code: ATP-citrate synthase beta chain protein 2 (608 aa).

ATP-binding positions include 214–234 (ILRF…ELGG) and 265–291 (FKSE…KNQA). E231 contributes to the Mg(2+) binding site. H273 functions as the Tele-phosphohistidine intermediate in the catalytic mechanism. Position 292 to 302 (292 to 302 (LIDAGAIVPTS)) interacts with CoA.

It belongs to the succinate/malate CoA ligase alpha subunit family. Heterooctamer of 4 alpha and 4 beta chains. As to expression, expressed in trichomes, epidermal leaf cells, anther tapetal cells, stigma and in young vascular bundles of expanding leaves, cotyledons, roots, pedicel of flowers and siliques.

The protein localises to the cytoplasm. The protein resides in the cytosol. It catalyses the reaction oxaloacetate + acetyl-CoA + ADP + phosphate = citrate + ATP + CoA. Its function is as follows. ATP citrate-lyase is the primary enzyme responsible for the synthesis of cytosolic acetyl-CoA, used for the elongation of fatty acids and biosynthesis of isoprenoids, flavonoids and malonated derivatives. May supply substrate to the cytosolic acetyl-CoA carboxylase, which generates the malonyl-CoA used for the synthesis of a multitude of compounds, including very long chain fatty acids and flavonoids. Required for normal growth and development and elongation of C18 fatty acids to C20 to C24 fatty acids in seeds. n contrast to all known animal ACL enzymes having a homomeric structure, plant ACLs are composed of alpha and beta chains. This chain is ATP-citrate synthase beta chain protein 2, found in Arabidopsis thaliana (Mouse-ear cress).